The following is a 213-amino-acid chain: Viral dihydrofolate reductase (213 aa).

Residues 4–184 (LLNCIVAVDQ…IKYKFEVYEK (181 aa)) form the DHFR domain. Residues Ala-10 and 16–22 (GIGKKGH) contribute to the NADP(+) site. 31-36 (DFKYFQ) lines the substrate pocket. 54–56 (KNT) contributes to the NADP(+) binding site. Arg-70 contacts substrate. Residues 76–78 (SKK) and 116–123 (GGSSVYKD) contribute to the NADP(+) site.

This sequence belongs to the dihydrofolate reductase family.

The catalysed reaction is (6S)-5,6,7,8-tetrahydrofolate + NADP(+) = 7,8-dihydrofolate + NADPH + H(+). It functions in the pathway cofactor biosynthesis; tetrahydrofolate biosynthesis; 5,6,7,8-tetrahydrofolate from 7,8-dihydrofolate: step 1/1. Key enzyme in folate metabolism. Catalyzes an essential reaction for de novo glycine and purine synthesis, and for DNA precursor synthesis. The polypeptide is Viral dihydrofolate reductase (DHFR) (Saimiri sciureus (Common squirrel monkey)).